Here is a 108-residue protein sequence, read N- to C-terminus: UPF0060 membrane protein amb3269 (108 aa).

4 helical membrane-spanning segments follow: residues 4–24 (IPTYILAAFAEIGGCFAFWAW), 31–51 (PLWLVPGMASLGLFAWALTRI), 59–79 (AYAAYGGIYILASLIWMWAVE), and 85–105 (RWDTIGAAICVVGAMVIIFGP).

It belongs to the UPF0060 family.

It is found in the cell inner membrane. This Paramagnetospirillum magneticum (strain ATCC 700264 / AMB-1) (Magnetospirillum magneticum) protein is UPF0060 membrane protein amb3269.